The chain runs to 1273 residues: DNA-directed RNA polymerase subunit beta (1273 aa).

Belongs to the RNA polymerase beta chain family. The RNAP catalytic core consists of 2 alpha, 1 beta, 1 beta' and 1 omega subunit. When a sigma factor is associated with the core the holoenzyme is formed, which can initiate transcription.

The enzyme catalyses RNA(n) + a ribonucleoside 5'-triphosphate = RNA(n+1) + diphosphate. DNA-dependent RNA polymerase catalyzes the transcription of DNA into RNA using the four ribonucleoside triphosphates as substrates. The chain is DNA-directed RNA polymerase subunit beta from Aster yellows witches'-broom phytoplasma (strain AYWB).